A 96-amino-acid polypeptide reads, in one-letter code: Acylphosphatase (96 aa).

One can recognise an Acylphosphatase-like domain in the interval 4–96 (RCEFLIFGKV…ESLNDFEILR (93 aa)). Catalysis depends on residues Arg19 and Asn42.

Belongs to the acylphosphatase family.

The enzyme catalyses an acyl phosphate + H2O = a carboxylate + phosphate + H(+). This is Acylphosphatase (acyP) from Helicobacter hepaticus (strain ATCC 51449 / 3B1).